Consider the following 106-residue polypeptide: MGMNQQRLTQVILAPIVSEKSNVLAEKRNQMTFKVLANATKPEIKAAVELLFGVQVASVTTVTTKGKTKRFGRTLGRRSDVKKAYVSLAAGQELDLEAAAAAADKE.

Belongs to the universal ribosomal protein uL23 family. In terms of assembly, part of the 50S ribosomal subunit. Contacts protein L29, and trigger factor when it is bound to the ribosome.

Its function is as follows. One of the early assembly proteins it binds 23S rRNA. One of the proteins that surrounds the polypeptide exit tunnel on the outside of the ribosome. Forms the main docking site for trigger factor binding to the ribosome. This is Large ribosomal subunit protein uL23 from Neisseria meningitidis serogroup A / serotype 4A (strain DSM 15465 / Z2491).